Reading from the N-terminus, the 209-residue chain is GTP cyclohydrolase-2 (209 aa).

A GTP-binding site is contributed by 49–53 (RIHSE). Residues C54, C65, and C67 each coordinate Zn(2+). Residues Q70, 92–94 (EGR), and T114 contribute to the GTP site. The Proton acceptor role is filled by D126. The Nucleophile role is filled by R128. Positions 149 and 154 each coordinate GTP.

It belongs to the GTP cyclohydrolase II family. Zn(2+) is required as a cofactor.

It catalyses the reaction GTP + 4 H2O = 2,5-diamino-6-hydroxy-4-(5-phosphoribosylamino)-pyrimidine + formate + 2 phosphate + 3 H(+). Its pathway is cofactor biosynthesis; riboflavin biosynthesis; 5-amino-6-(D-ribitylamino)uracil from GTP: step 1/4. Its function is as follows. Catalyzes the conversion of GTP to 2,5-diamino-6-ribosylamino-4(3H)-pyrimidinone 5'-phosphate (DARP), formate and pyrophosphate. This is GTP cyclohydrolase-2 from Shewanella pealeana (strain ATCC 700345 / ANG-SQ1).